Reading from the N-terminus, the 76-residue chain is Large ribosomal subunit protein uL24 (76 aa).

The protein belongs to the universal ribosomal protein uL24 family. In terms of assembly, part of the 50S ribosomal subunit.

One of two assembly initiator proteins, it binds directly to the 5'-end of the 23S rRNA, where it nucleates assembly of the 50S subunit. Its function is as follows. One of the proteins that surrounds the polypeptide exit tunnel on the outside of the subunit. In Wolinella succinogenes (strain ATCC 29543 / DSM 1740 / CCUG 13145 / JCM 31913 / LMG 7466 / NCTC 11488 / FDC 602W) (Vibrio succinogenes), this protein is Large ribosomal subunit protein uL24.